We begin with the raw amino-acid sequence, 700 residues long: uncharacterized protein (700 aa).

4 residues coordinate [4Fe-4S] cluster: Cys307, Cys310, Cys314, and Cys558.

Belongs to the AOR/FOR family. The cofactor is [4Fe-4S] cluster. Requires Mo-molybdopterin as cofactor. Tungstopterin is required as a cofactor.

This is an uncharacterized protein from Escherichia coli (strain K12).